Reading from the N-terminus, the 348-residue chain is Uroporphyrinogen decarboxylase (348 aa).

Substrate is bound by residues 28-32, D78, Y154, T209, and H325; that span reads RQAGR.

This sequence belongs to the uroporphyrinogen decarboxylase family. In terms of assembly, homodimer.

Its subcellular location is the cytoplasm. It catalyses the reaction uroporphyrinogen III + 4 H(+) = coproporphyrinogen III + 4 CO2. The protein operates within porphyrin-containing compound metabolism; protoporphyrin-IX biosynthesis; coproporphyrinogen-III from 5-aminolevulinate: step 4/4. Its function is as follows. Catalyzes the decarboxylation of four acetate groups of uroporphyrinogen-III to yield coproporphyrinogen-III. This is Uroporphyrinogen decarboxylase from Rhodopseudomonas palustris (strain BisA53).